A 574-amino-acid polypeptide reads, in one-letter code: Man(5)GlcNAc(2)-PP-dolichol translocation protein RFT1 (574 aa).

Over 1–24 (MAKKNSQLPSTSEQILERSTTGAT) the chain is Lumenal. Residues 25–45 (FLMMGQLFTKLVTFILNNLLI) form a helical membrane-spanning segment. At 46 to 48 (RFL) the chain is on the cytoplasmic side. The helical transmembrane segment at 49–69 (SPRIFGITAFLEFIQGTVLFF) threads the bilayer. The Lumenal segment spans residues 70–110 (SRDAIRLSTLRISDSGNGIIDDDDEEEYQETHYKSKVLQTA). The helical transmembrane segment at 111–131 (VNFAYIPFWIGFPLSIGLIAW) threads the bilayer. Topologically, residues 132–148 (QYRNINAYFITLPFFRW) are cytoplasmic. A helical transmembrane segment spans residues 149 to 169 (SIFLIWLSIIVELLSEPFFIV). Over 170 to 181 (NQFMLNYAARSR) the chain is Lumenal. Residues 182-202 (FESIAVTTGCIVNFIVVYAVQ) form a helical membrane-spanning segment. The Cytoplasmic portion of the chain corresponds to 203–218 (QSRYPMGVVTSDIDKE). A helical membrane pass occupies residues 219-239 (GIAILAFALGKLAHSITLLAC). Residues 240–319 (YYWDYLKNFK…INSLCTVEEQ (80 aa)) are Lumenal-facing. Residues 320–340 (GIYALLSNYGSLLTRLLFAPI) traverse the membrane as a helical segment. Residues 341 to 372 (EESLRLFLARLLSSHNPKNLKLSIEVLVNLTR) are Cytoplasmic-facing. A helical membrane pass occupies residues 373–393 (FYIYLSLMIIVFGPANSSFLL). The Lumenal segment spans residues 394 to 413 (QFLIGSKWSTTSVLDTIRVY). Residues 414-434 (CFYIPFLSLNGIFEAFFQSVA) form a helical membrane-spanning segment. Residues 435 to 443 (TGDQILKHS) lie on the Cytoplasmic side of the membrane. The chain crosses the membrane as a helical span at residues 444-464 (YFMMAFSGIFLLNSWLLIEKL). The Lumenal portion of the chain corresponds to 465–469 (KLSIE). The chain crosses the membrane as a helical span at residues 470 to 490 (GLILSNIINMVLRILYCGVFL). Topologically, residues 491 to 509 (NKFHRELFTDSSFFFNFKD) are cytoplasmic. The chain crosses the membrane as a helical span at residues 510 to 530 (FKTVIIAGSTICLLDWWFIGY). At 531–532 (VK) the chain is on the lumenal side. Residues 533–553 (NLQQFVVNVLFAMGLLALILV) form a helical membrane-spanning segment. Residues 554–574 (KERQTIQSFINKRAVSNSKDV) are Cytoplasmic-facing.

It belongs to the RFT1 family.

The protein resides in the endoplasmic reticulum membrane. It participates in protein modification; protein glycosylation. Intramembrane glycolipid transporter that operates in the biosynthetic pathway of dolichol-linked oligosaccharides, the glycan precursors employed in protein asparagine (N)-glycosylation. The sequential addition of sugars to dolichol pyrophosphate produces dolichol-linked oligosaccharides containing fourteen sugars, including two GlcNAcs, nine mannoses and three glucoses. Once assembled, the oligosaccharide is transferred from the lipid to nascent proteins by oligosaccharyltransferases. The assembly of dolichol-linked oligosaccharides begins on the cytosolic side of the endoplasmic reticulum membrane and finishes in its lumen. RFT1 could mediate the translocation of the cytosolically oriented intermediate DolPP-GlcNAc2Man5, produced by ALG11, into the ER lumen where dolichol-linked oligosaccharides assembly continues. However, the intramembrane lipid transporter activity could not be confirmed in vitro. This is Man(5)GlcNAc(2)-PP-dolichol translocation protein RFT1 from Saccharomyces cerevisiae (strain ATCC 204508 / S288c) (Baker's yeast).